The primary structure comprises 106 residues: Iron-sulfur cluster assembly protein CyaY (106 aa).

It belongs to the frataxin family.

Its function is as follows. Involved in iron-sulfur (Fe-S) cluster assembly. May act as a regulator of Fe-S biogenesis. The protein is Iron-sulfur cluster assembly protein CyaY of Yersinia pestis bv. Antiqua (strain Antiqua).